The chain runs to 415 residues: Multidrug resistance protein MdtA (415 aa).

The first 21 residues, 1 to 21 (MKGSYKSRWVIVIVVVIAAIA), serve as a signal peptide directing secretion. Disordered stretches follow at residues 32 to 60 (SRSAAPGATKQAQQSPASGRRGMRSGPLA) and 392 to 415 (EAQSATTPEEKATSREYAKKGARS). Basic and acidic residues predominate over residues 399-415 (PEEKATSREYAKKGARS).

Belongs to the membrane fusion protein (MFP) (TC 8.A.1) family. In terms of assembly, part of a tripartite efflux system composed of MdtA, MdtB and MdtC.

It is found in the cell inner membrane. Functionally, the MdtABC tripartite complex confers resistance against novobiocin and deoxycholate. This is Multidrug resistance protein MdtA from Escherichia coli O81 (strain ED1a).